A 101-amino-acid chain; its full sequence is Large ribosomal subunit protein bL25 (101 aa).

The protein belongs to the bacterial ribosomal protein bL25 family. In terms of assembly, part of the 50S ribosomal subunit; part of the 5S rRNA/L5/L18/L25 subcomplex. Contacts the 5S rRNA. Binds to the 5S rRNA independently of L5 and L18.

Functionally, this is one of the proteins that binds to the 5S RNA in the ribosome where it forms part of the central protuberance. The sequence is that of Large ribosomal subunit protein bL25 from Thermosynechococcus vestitus (strain NIES-2133 / IAM M-273 / BP-1).